The primary structure comprises 502 residues: Ubiquitin-associated protein 1 (502 aa).

The interval 1 to 95 (MASKKLGTDV…AEAKVNSKSG (95 aa)) is interaction with ESCRT-I. The UMA domain occupies 17-63 (LDDVPFKIGDKFKTPAKVGLPIGFSLPDCLQVVREMQYDFSLEKKTI). The segment covering 80 to 100 (ERKAEEAEAKVNSKSGPEGDS) has biased composition (basic and acidic residues). Disordered stretches follow at residues 80–117 (ERKAEEAEAKVNSKSGPEGDSKVSFPKTHNTATMPPPI) and 135–156 (VSSSATKQKVLSPPHTKADFNP). Phosphoserine occurs at positions 146, 205, and 289. An interaction with PTPN23 region spans residues 260 to 290 (VSNIKSLSFPKLDSDDSNQKTVKLASTFHST). 2 consecutive UBA domains span residues 389 to 430 (SPSE…LFAH) and 451 to 498 (QCSE…LMAR).

Component of an ESCRT-I complex (endosomal sorting complex required for transport I) which consists of TSG101, VPS28, VPS37A and UBAP1 in a 1:1:1:1 stoichiometry. Interacts with PTPN23. Interacts (via UBA domains) with ubiquitinated proteins. Ubiquitous. Highly expressed in heart, liver, brain, kidney, spleen, skeletal muscle, stomach, testis and lung.

Its subcellular location is the cytoplasm. The protein resides in the cytosol. It localises to the endosome. Its function is as follows. Component of the ESCRT-I complex, a regulator of vesicular trafficking process. Binds to ubiquitinated cargo proteins and is required for the sorting of endocytic ubiquitinated cargos into multivesicular bodies (MVBs). Plays a role in the proteasomal degradation of ubiquitinated cell-surface proteins, such as EGFR and BST2. This Mus musculus (Mouse) protein is Ubiquitin-associated protein 1.